The chain runs to 276 residues: 2-dehydro-3-deoxyphosphooctonate aldolase (276 aa).

The protein belongs to the KdsA family.

It is found in the cytoplasm. It catalyses the reaction D-arabinose 5-phosphate + phosphoenolpyruvate + H2O = 3-deoxy-alpha-D-manno-2-octulosonate-8-phosphate + phosphate. The protein operates within carbohydrate biosynthesis; 3-deoxy-D-manno-octulosonate biosynthesis; 3-deoxy-D-manno-octulosonate from D-ribulose 5-phosphate: step 2/3. It functions in the pathway bacterial outer membrane biogenesis; lipopolysaccharide biosynthesis. This chain is 2-dehydro-3-deoxyphosphooctonate aldolase, found in Xanthomonas oryzae pv. oryzae (strain MAFF 311018).